Here is a 292-residue protein sequence, read N- to C-terminus: Phosphotriesterase homology protein (292 aa).

Residues His-12, His-14, and Glu-125 each contribute to the Zn(2+) site. Beta-D-glucose is bound at residue His-148 to Asn-149. His-158 is a binding site for Zn(2+). Beta-D-glucose-binding residues include Gly-176, Asp-178, and Arg-181. Zn(2+) is bound by residues His-186 and Asp-243. Beta-D-glucose-binding residues include Asp-280 and Arg-284.

It belongs to the metallo-dependent hydrolases superfamily. Phosphotriesterase family. Monomer. Zn(2+) serves as cofactor.

Activity is higher in the enzyme containing Mn(2+) than that containing Zn(2+). Catalyzes the hydrolysis of phosphorylated glyceryl acetates in which the presence of a phosphate group is required for the enzymatic hydrolysis. Hydrolyzes a dibutyl glycerol derivative suggesting it acts on phosphoglycerol substrates with a butyrate leaving group. Also active with aromatic acetates and propionates. No activity with various sugar phosphates, with various nitrophenylphosphate or nitrophenylphosphonate derivatives, or with phosphorylated or non-phosphorylated sugar lactones tested. Does not hydrolyze non-phosphorylated carboxyesters with long chain leaving groups. No general esterase, aminopeptidase, sulfatase, phosphatase, carbonic anhydrase, phosphodiesterase, and phosphotriesterase activities detected when tested with the following non-specific substrates: p-nitrophenyl acetate, L-alanine nitroanilide, p-nitrophenyl sulfate, bis(p-nitrophenyl) phosphate, paraoxon, and p-nitrophenyl phosphate. The protein is Phosphotriesterase homology protein of Escherichia coli (strain K12).